The chain runs to 392 residues: Tryptophan synthase beta chain (392 aa).

Lys84 bears the N6-(pyridoxal phosphate)lysine mark.

This sequence belongs to the TrpB family. In terms of assembly, tetramer of two alpha and two beta chains. The cofactor is pyridoxal 5'-phosphate.

The catalysed reaction is (1S,2R)-1-C-(indol-3-yl)glycerol 3-phosphate + L-serine = D-glyceraldehyde 3-phosphate + L-tryptophan + H2O. It participates in amino-acid biosynthesis; L-tryptophan biosynthesis; L-tryptophan from chorismate: step 5/5. Functionally, the beta subunit is responsible for the synthesis of L-tryptophan from indole and L-serine. The protein is Tryptophan synthase beta chain of Campylobacter jejuni subsp. jejuni serotype O:6 (strain 81116 / NCTC 11828).